The following is a 157-amino-acid chain: 2-C-methyl-D-erythritol 2,4-cyclodiphosphate synthase (157 aa).

2 residues coordinate a divalent metal cation: Asp8 and His10. Residues 8-10 (DVH) and 34-35 (HS) contribute to the 4-CDP-2-C-methyl-D-erythritol 2-phosphate site. Residue His42 coordinates a divalent metal cation. 4-CDP-2-C-methyl-D-erythritol 2-phosphate contacts are provided by residues 56–58 (DIG), 61–65 (FPDTD), 100–106 (AQAPKMA), 132–135 (TTTE), Phe139, and Arg142.

The protein belongs to the IspF family. As to quaternary structure, homotrimer. A divalent metal cation is required as a cofactor.

It carries out the reaction 4-CDP-2-C-methyl-D-erythritol 2-phosphate = 2-C-methyl-D-erythritol 2,4-cyclic diphosphate + CMP. The protein operates within isoprenoid biosynthesis; isopentenyl diphosphate biosynthesis via DXP pathway; isopentenyl diphosphate from 1-deoxy-D-xylulose 5-phosphate: step 4/6. Functionally, involved in the biosynthesis of isopentenyl diphosphate (IPP) and dimethylallyl diphosphate (DMAPP), two major building blocks of isoprenoid compounds. Catalyzes the conversion of 4-diphosphocytidyl-2-C-methyl-D-erythritol 2-phosphate (CDP-ME2P) to 2-C-methyl-D-erythritol 2,4-cyclodiphosphate (ME-CPP) with a corresponding release of cytidine 5-monophosphate (CMP). In Pseudomonas aeruginosa (strain UCBPP-PA14), this protein is 2-C-methyl-D-erythritol 2,4-cyclodiphosphate synthase.